A 226-amino-acid polypeptide reads, in one-letter code: Uracil phosphoribosyltransferase (226 aa).

36–40 (KGLVK) contributes to the GTP binding site. 5-phospho-alpha-D-ribose 1-diphosphate is bound by residues arginine 86, arginine 111, and 145–153 (DPMLATGST). Uracil is bound by residues isoleucine 211 and 216-218 (GDA). Aspartate 217 serves as a coordination point for 5-phospho-alpha-D-ribose 1-diphosphate.

This sequence belongs to the UPRTase family. It depends on Mg(2+) as a cofactor.

It carries out the reaction UMP + diphosphate = 5-phospho-alpha-D-ribose 1-diphosphate + uracil. Its pathway is pyrimidine metabolism; UMP biosynthesis via salvage pathway; UMP from uracil: step 1/1. Its activity is regulated as follows. Allosterically activated by GTP. Functionally, catalyzes the conversion of uracil and 5-phospho-alpha-D-ribose 1-diphosphate (PRPP) to UMP and diphosphate. The sequence is that of Uracil phosphoribosyltransferase from Haloquadratum walsbyi (strain DSM 16790 / HBSQ001).